The sequence spans 932 residues: Progesterone receptor (932 aa).

The segment at 1 to 164 is AF3; mediates transcriptional activation; it reads MTELKAKGPR…PATQGVLSPL (164 aa). The disordered stretch occupies residues 1-254; it reads MTELKAKGPR…GGAAAGGAAA (254 aa). A modulating, Pro-Rich region spans residues 1 to 565; that stretch reads MTELKAKGPR…YSFESLPQKI (565 aa). Ser-20 is subject to Phosphoserine. The LXXL motif 1 signature appears at 55-59; it reads LDGLL. At Ser-81 the chain carries Phosphoserine. Low complexity predominate over residues 88 to 103; the sequence is SRAEATRGAGGSSSSP. The LXXL motif 2 signature appears at 115–119; it reads LDTLL. A phosphoserine mark is found at Ser-130 and Ser-162. Residues 165 to 304 form a mediates transcriptional transrepression region; sequence MSRSGGKAGD…LATTVMDFIH (140 aa). The Nuclear localization signal signature appears at 183-187; it reads KVLPQ. A phosphoserine mark is found at Ser-190 and Ser-213. Positions 220–231 are enriched in acidic residues; that stretch reads EVEEEDGSESED. Positions 232-254 are enriched in low complexity; sequence SAGPLLKGKPRALGGAAAGGAAA. Ser-293 is subject to Phosphoserine; by MAPK1. Residues 334 to 349 show a composition bias toward low complexity; the sequence is AASAFAPPRSSPSASS. The tract at residues 334–356 is disordered; that stretch reads AASAFAPPRSSPSASSTPVAVGD. Ser-344 carries the post-translational modification Phosphoserine; by MAPK. Residue Lys-387 forms a Glycyl lysine isopeptide (Lys-Gly) (interchain with G-Cter in SUMO); alternate linkage. Lys-387 is covalently cross-linked (Glycyl lysine isopeptide (Lys-Gly) (interchain with G-Cter in ubiquitin); alternate). Disordered regions lie at residues 414-451 and 468-499; these read PDFP…SSAS and PPQQ…STAA. Positions 417–432 are enriched in pro residues; it reads PLGPPPPLPPRAPPSR. The span at 433–451 shows a compositional bias: low complexity; the sequence is PGEAAVTAAPASASVSSAS. Residues 455–545 are AF1; mediates transcriptional activation; sequence STLECILYKA…VYPPYLNYLR (91 aa). Residues 470–480 show a composition bias toward pro residues; the sequence is QQGPFAPPPSK. A Glycyl lysine isopeptide (Lys-Gly) (interchain with G-Cter in SUMO) cross-link involves residue Lys-530. 2 consecutive NR C4-type zinc fingers follow at residues 566–586 and 602–626; these read CLIC…CGSC and CAGR…LRKC. The nuclear receptor DNA-binding region spans 566 to 638; that stretch reads CLICGDEASG…AGMVLGGRKF (73 aa). Phosphoserine is present on Ser-675. The 235-residue stretch at 678–912 folds into the NR LBD domain; sequence QDIQLIPPLI…EFPEMMSEVI (235 aa). The AF2; mediates transcriptional activation stretch occupies residues 686 to 932; sequence LINLLMSIEP…MVKPLLFHKK (247 aa). Position 765 (Arg-765) interacts with progesterone.

It belongs to the nuclear hormone receptor family. Interacts with SMARD1 and UNC45A. Interacts with CUEDC2; the interaction promotes ubiquitination, decreases sumoylation, and represses transcriptional activity. Interacts with PIAS3; the interaction promotes sumoylation of PR in a hormone-dependent manner, inhibits DNA-binding, and alters nuclear export. Interacts with SP1; the interaction requires ligand-induced phosphorylation on Ser-344 by ERK1/2-MAPK. Interacts with PRMT2. Interacts with NCOA2 and NCOA1. Interacts with KLF9. Interacts with GTF2B. Post-translationally, phosphorylated on multiple serine sites. Several of these sites are hormone-dependent. Phosphorylation on Ser-293 is highly hormone-dependent and modulates ubiquitination and sumoylation on Lys-387. Phosphorylation on Ser-102 and Ser-344 also requires induction by hormone. Basal phosphorylation on Ser-81, Ser-162 and Ser-190 is increased in response to progesterone and can be phosphorylated in vitro by the CDK2-A1 complex. Phosphorylation at Ser-162 and Ser-293, but not at Ser-190, is impaired during the G(2)/M phase of the cell cycle. Phosphorylation on Ser-344 by ERK1/2 MAPK is required for interaction with SP1. Sumoylation is hormone-dependent and represses transcriptional activity. Sumoylation on all three sites is enhanced by PIAS3. Desumoylated by SENP1. Sumoylation on Lys-387, the main site of sumoylation, is repressed by ubiquitination on the same site, and modulated by phosphorylation at Ser-293. In terms of processing, ubiquitination is hormone-dependent and represses sumoylation on the same site. Promoted by MAPK-mediated phosphorylation on Ser-293. Ubiquitinated by UBR5, leading to its degradation: UBR5 specifically recognizes and binds ligand-bound PGR when it is not associated with coactivators (NCOAs). In presence of NCOAs, the UBR5-degron is not accessible, preventing its ubiquitination and degradation. Post-translationally, palmitoylated by ZDHHC7 and ZDHHC21. Palmitoylation is required for plasma membrane targeting and for rapid intracellular signaling via ERK and AKT kinases and cAMP generation.

The protein localises to the nucleus. The protein resides in the cytoplasm. The steroid hormones and their receptors are involved in the regulation of eukaryotic gene expression and affect cellular proliferation and differentiation in target tissues. Transcriptional activator of several progesteron-dependent promoters in a variety of cell types. Involved in activation of SRC-dependent MAPK signaling on hormone stimulation. In Hylobates lar (Lar gibbon), this protein is Progesterone receptor (PGR).